The sequence spans 467 residues: Xanthan biosynthesis protein XanB (467 aa).

It belongs to the mannose-6-phosphate isomerase type 2 family.

It catalyses the reaction D-mannose 6-phosphate = D-fructose 6-phosphate. The enzyme catalyses alpha-D-mannose 1-phosphate + GTP + H(+) = GDP-alpha-D-mannose + diphosphate. The protein operates within nucleotide-sugar biosynthesis; GDP-alpha-D-mannose biosynthesis; GDP-alpha-D-mannose from alpha-D-mannose 1-phosphate (GTP route): step 1/1. It functions in the pathway nucleotide-sugar biosynthesis; GDP-alpha-D-mannose biosynthesis; alpha-D-mannose 1-phosphate from D-fructose 6-phosphate: step 1/2. Its function is as follows. Involved in xanthan production. This chain is Xanthan biosynthesis protein XanB (xanB), found in Xanthomonas campestris pv. campestris (strain B100).